Here is a 246-residue protein sequence, read N- to C-terminus: Probable transcriptional regulatory protein BVU_3469 (246 aa).

The protein belongs to the TACO1 family.

It localises to the cytoplasm. The protein is Probable transcriptional regulatory protein BVU_3469 of Phocaeicola vulgatus (strain ATCC 8482 / DSM 1447 / JCM 5826 / CCUG 4940 / NBRC 14291 / NCTC 11154) (Bacteroides vulgatus).